Here is a 78-residue protein sequence, read N- to C-terminus: Magnetosome protein MamL (78 aa).

Residues 1-22 form the signal peptide; the sequence is MVRVIGSLVFGGLILLLASSNA. The Lumenal segment spans residues 23–38; the sequence is HMVETRFGPLIMLAPH. A helical membrane pass occupies residues 39–59; sequence FVVLGITFFLGFAIGIVLVFA. Residues 60 to 78 lie on the Cytoplasmic side of the membrane; sequence NVMKRRKHKLPGKNIVIKR.

Belongs to the magnetosome MamL family.

The protein localises to the magnetosome membrane. In terms of biological role, involved in magnetite crystal maturation, but not in magnetosome vesicle tubulation or formation. One of 7 genes (mamLQBIEMO) able to induce magnetosome membrane biogenesis; coexpression of mamLQRBIEMO in a deletion of the 17 gene mamAB operon restores magnetosome vesicle formation but not magnetite biosynthesis. The protein is Magnetosome protein MamL of Magnetospirillum gryphiswaldense (strain DSM 6361 / JCM 21280 / NBRC 15271 / MSR-1).